The following is a 207-amino-acid chain: MSKLSSRQQAIIEFIRKEVRDKGYPPSVREIGEAVGLASSSTVHGHLARLEKKGLIRRDPTKPRAIELLSDEDRFQDNFEDSVVRVPVIGKVTAGQPITAIEDVEEYFPLPDNIVTSDKVYMLRVSGNSMIDAGILDGDYVIVRQQHVANNGDIVVAMTEEDEATVKRFFKEKNHFRLQPENATMEPIILEHVTILGKVIGVYRLIH.

The H-T-H motif DNA-binding region spans 28 to 48; sequence VREIGEAVGLASSSTVHGHLA. Residues Ser-129 and Lys-167 each act as for autocatalytic cleavage activity in the active site.

This sequence belongs to the peptidase S24 family. In terms of assembly, homodimer.

The enzyme catalyses Hydrolysis of Ala-|-Gly bond in repressor LexA.. Represses a number of genes involved in the response to DNA damage (SOS response), including recA and lexA. In the presence of single-stranded DNA, RecA interacts with LexA causing an autocatalytic cleavage which disrupts the DNA-binding part of LexA, leading to derepression of the SOS regulon and eventually DNA repair. In Brevibacillus brevis (strain 47 / JCM 6285 / NBRC 100599), this protein is LexA repressor.